We begin with the raw amino-acid sequence, 312 residues long: Homoserine O-acetyltransferase (312 aa).

The active-site Acyl-thioester intermediate is the Cys-142. The substrate site is built by Lys-163 and Ser-192. The active-site Proton acceptor is His-235. Residue Glu-237 is part of the active site. Position 249 (Arg-249) interacts with substrate.

It belongs to the MetA family.

The protein localises to the cytoplasm. It catalyses the reaction L-homoserine + acetyl-CoA = O-acetyl-L-homoserine + CoA. The protein operates within amino-acid biosynthesis; L-methionine biosynthesis via de novo pathway; O-acetyl-L-homoserine from L-homoserine: step 1/1. Transfers an acetyl group from acetyl-CoA to L-homoserine, forming acetyl-L-homoserine. This is Homoserine O-acetyltransferase from Ruegeria sp. (strain TM1040) (Silicibacter sp.).